We begin with the raw amino-acid sequence, 379 residues long: Transcription factor TIP2 (379 aa).

The disordered stretch occupies residues 144–184 (MVGPFESSPTPRSGGGRKRSRATAGFHGGGPANGVEKKEKQ). Residues 173–186 (GPANGVEKKEKQRR) are basic motif; degenerate. The bHLH domain maps to 173-222 (GPANGVEKKEKQRRLRLTEKYNALMLLIPNRTKEDRATVISDAIEYIQEL). Positions 187–222 (LRLTEKYNALMLLIPNRTKEDRATVISDAIEYIQEL) are helix-loop-helix motif.

This sequence belongs to the bHLH protein family. As to quaternary structure, homodimer. Interacts with TDR, but not with EAT1. In terms of tissue distribution, highly expressed in anthers; strong expression in the middle layer and tapetum, and weak expression in the endothecium.

It localises to the nucleus. Transcription factor that binds to the E-box-containing promoter regions of the transcription factors TDR and EAT1, activating their expression. May have a role in specifying the cell pattern of the inner anther walls and functioning in meiosis progression. Required for male reproduction. Acts downstream of UDT1 and GAMYB, but upstream of TDR1 and EAT1 in pollen development. The protein is Transcription factor TIP2 (TIP2) of Oryza sativa subsp. japonica (Rice).